A 665-amino-acid polypeptide reads, in one-letter code: Macrolide export ATP-binding/permease protein MacB (665 aa).

The region spanning 17 to 255 (MQVKGLIREF…AAQPASIIDK (239 aa)) is the ABC transporter domain. 53-60 (GQSGSGKS) contacts ATP. 4 consecutive transmembrane segments (helical) span residues 287-307 (LLTMLGIIIGIASVVSVVGLG), 544-564 (IAIISLIVGGIGVMNIMLVSV), 588-608 (FLIEAILVCILGGLLGIGLAF), and 630-650 (SIIAAFVCSTLIGVVFGFLPA).

It belongs to the ABC transporter superfamily. Macrolide exporter (TC 3.A.1.122) family. In terms of assembly, homodimer. Part of the tripartite efflux system MacAB-TolC, which is composed of an inner membrane transporter, MacB, a periplasmic membrane fusion protein, MacA, and an outer membrane component, TolC. The complex forms a large protein conduit and can translocate molecules across both the inner and outer membranes. Interacts with MacA.

The protein localises to the cell inner membrane. In terms of biological role, part of the tripartite efflux system MacAB-TolC. MacB is a non-canonical ABC transporter that contains transmembrane domains (TMD), which form a pore in the inner membrane, and an ATP-binding domain (NBD), which is responsible for energy generation. Confers resistance against macrolides. In Psychrobacter cryohalolentis (strain ATCC BAA-1226 / DSM 17306 / VKM B-2378 / K5), this protein is Macrolide export ATP-binding/permease protein MacB.